We begin with the raw amino-acid sequence, 85 residues long: Small ribosomal subunit protein bS20 (85 aa).

Belongs to the bacterial ribosomal protein bS20 family.

Its function is as follows. Binds directly to 16S ribosomal RNA. This chain is Small ribosomal subunit protein bS20, found in Ruminiclostridium cellulolyticum (strain ATCC 35319 / DSM 5812 / JCM 6584 / H10) (Clostridium cellulolyticum).